A 594-amino-acid polypeptide reads, in one-letter code: Lipolysis-stimulated lipoprotein receptor (594 aa).

The N-terminal stretch at 1 to 35 is a signal peptide; the sequence is MAPAASACAGAPGSHPATTIFVCLFLIIYCPDRAS. At 36 to 206 the chain is on the extracellular side; it reads AIQVTVPDPY…PGFRAGPLED (171 aa). The Ig-like V-type domain maps to 89–181; it reads PASVDNQLNA…DLDGNNEAYA (93 aa). C113 and C165 form a disulfide bridge. The chain crosses the membrane as a helical span at residues 207–227; that stretch reads WLFVVVVCLASLLFFLLLGIC. The Cytoplasmic portion of the chain corresponds to 228–594; that stretch reads WCQCCPHTCC…LALSRESLVV (367 aa). T283 is modified (phosphothreonine). Residue S308 is modified to Phosphoserine; by MAPK8 and MAPK9. Residues S314, S332, S375, and S379 each carry the phosphoserine modification. Positions 375 to 387 are enriched in basic and acidic residues; the sequence is SEVTSLHEDDWRS. The disordered stretch occupies residues 375–594; the sequence is SEVTSLHEDD…LALSRESLVV (220 aa). A Phosphothreonine modification is found at T396. Phosphoserine occurs at positions 407, 410, and 436. Residues 435-444 show a composition bias toward basic and acidic residues; that stretch reads RSVDALDDIN. The span at 445–460 shows a compositional bias: low complexity; it reads RPGSTESGRSSPPSSG. Phosphoserine is present on residues S471 and S473. Residues 472–550 show a composition bias toward basic and acidic residues; the sequence is RSRDDLYDPD…GAGERRRVYR (79 aa). Residue Y478 is modified to Phosphotyrosine. Residue S576 is modified to Phosphoserine. A Glycyl lysine isopeptide (Lys-Gly) (interchain with G-Cter in ubiquitin) cross-link involves residue K583. 2 positions are modified to phosphoserine: S588 and S591.

Belongs to the immunoglobulin superfamily. LISCH7 family. Homotrimer or homotetramer. Assembles into cell-cell contacts. Interacts (via the cytoplasmic domain) with MARVELD2 (via C-terminal cytoplasmic domain); the interaction is required to recruit MARVELD2 to tricellular contacts. Interacts with OCLN. Phosphorylation at Ser-308 by MAPK8/JNK1 and MAPK9/JNK2 may be required for exclusive localization at tricellular tight junstions. Post-translationally, polyubiquitinated at Lys-583 via 'Lys-63'-linked ubiquitin chains; deubiquitinated by USP53. In terms of tissue distribution, expressed in epithelial tissues (at protein level). Specifically expressed in liver and to a lower extent in kidney (at protein level). Also detected in brain, testis, ovaries, adrenal gland, intestine, muscle, and lung. In colon, only expressed in the lower portion of crypts. Expressed in the liver. As to expression, expressed in liver, stomach, small intestine and colon. Also detected in other epithelial tissues.

The protein resides in the cell membrane. It is found in the cell junction. The protein localises to the tight junction. Its function is as follows. Probable role in the clearance of triglyceride-rich lipoprotein from blood. Binds chylomicrons, LDL and VLDL in presence of free fatty acids and allows their subsequent uptake in the cells. Maintains epithelial barrier function by recruiting MARVELD2/tricellulin to tricellular tight junctions. In Mus musculus (Mouse), this protein is Lipolysis-stimulated lipoprotein receptor.